The sequence spans 661 residues: Fructose-1,6-bisphosphatase class 3 (661 aa).

The protein belongs to the FBPase class 3 family. It depends on Mn(2+) as a cofactor.

The enzyme catalyses beta-D-fructose 1,6-bisphosphate + H2O = beta-D-fructose 6-phosphate + phosphate. It participates in carbohydrate biosynthesis; gluconeogenesis. The chain is Fructose-1,6-bisphosphatase class 3 from Clostridioides difficile (strain 630) (Peptoclostridium difficile).